Reading from the N-terminus, the 204-residue chain is LexA repressor (204 aa).

The H-T-H motif DNA-binding region spans 27-47; the sequence is VREIGEAVGLASSSTVHGHLA. Active-site for autocatalytic cleavage activity residues include Ser126 and Lys164.

The protein belongs to the peptidase S24 family. As to quaternary structure, homodimer.

The catalysed reaction is Hydrolysis of Ala-|-Gly bond in repressor LexA.. In terms of biological role, represses a number of genes involved in the response to DNA damage (SOS response), including recA and lexA. In the presence of single-stranded DNA, RecA interacts with LexA causing an autocatalytic cleavage which disrupts the DNA-binding part of LexA, leading to derepression of the SOS regulon and eventually DNA repair. The chain is LexA repressor from Listeria innocua serovar 6a (strain ATCC BAA-680 / CLIP 11262).